Here is a 675-residue protein sequence, read N- to C-terminus: Acetyl-coenzyme A synthetase 2 (675 aa).

CoA-binding positions include 206–209 and Thr325; that span reads RGGK. ATP contacts are provided by residues 401–403, 425–430, Asp516, and Arg531; these read GEP and DTMWQT. Ser539 provides a ligand contact to CoA. Residue Arg542 coordinates ATP. A CoA-binding site is contributed by Arg604.

This sequence belongs to the ATP-dependent AMP-binding enzyme family.

It carries out the reaction acetate + ATP + CoA = acetyl-CoA + AMP + diphosphate. This Zygosaccharomyces bailii protein is Acetyl-coenzyme A synthetase 2 (ACS2).